The chain runs to 148 residues: WAP four-disulfide core domain protein 12 (148 aa).

The signal sequence occupies residues 1–23 (MRSYSFWFLTAFLVFATLALGEA). Positions 27–74 (GKEKWGNCPAEKGSCIKSGPSQCHADNDCPGDKKCCFLSCSFKCVSPD) constitute a WAP domain. 4 cysteine pairs are disulfide-bonded: Cys-34–Cys-62, Cys-41–Cys-66, Cys-49–Cys-61, and Cys-55–Cys-70. The interval 74–148 (DRIRKEGGNE…QEASPQKEWS (75 aa)) is disordered.

The protein resides in the secreted. In terms of biological role, antibacterial protein. Putative acid-stable proteinase inhibitor. This Lemur catta (Ring-tailed lemur) protein is WAP four-disulfide core domain protein 12 (WFDC12).